We begin with the raw amino-acid sequence, 186 residues long: MTIADIKKTTEAKMDQSIAAFKNNLAKIRTGRANPQLLDTIHVEYYGSMVPLSQVANVALLDARTISVQPWEKNMGAKIEKAIRESDLGLNPASMGDLIRVPMPPMSEERRKEMTKLARSEGEGAKVAIRNLRRDANEGVKKLVKDKLASEDDQKRAEADVQKTTDKHIAEIDALVAAKEQEIMAI.

The protein belongs to the RRF family.

The protein localises to the cytoplasm. Functionally, responsible for the release of ribosomes from messenger RNA at the termination of protein biosynthesis. May increase the efficiency of translation by recycling ribosomes from one round of translation to another. This is Ribosome-recycling factor from Acidovorax ebreus (strain TPSY) (Diaphorobacter sp. (strain TPSY)).